A 215-amino-acid chain; its full sequence is MKALFEARINFIVTEKQIKRVRAPNEDWLQDDEVDVVLRFSNVVKLMNGIQNVQKLYLTADTIEVLSLCCESVPLFNNLKTLGITSEEGRGWQAMPVLGLLHYMTDKCGDACDCISREDKGRSLTSCPVKKLEIRGFRGTMKEMTMIKHFLVYFPCLKEMNIYVEEYDPTELRFPQVSKVIIQMMEEYNKLSSCNVQLLITDYLSEKWTAAGRIL.

Residues 122 to 199 (RSLTSCPVKK…KLSSCNVQLL (78 aa)) form the FBD domain.

The polypeptide is FBD domain-containing protein At3g58975 (Arabidopsis thaliana (Mouse-ear cress)).